A 43-amino-acid chain; its full sequence is Mu-conotoxin-like Cal 12.2c (43 aa).

Arginine 1 is a propeptide. 4 disulfides stabilise this stretch: cysteine 4–cysteine 16, cysteine 11–cysteine 24, cysteine 18–cysteine 29, and cysteine 23–cysteine 35. 6'-bromotryptophan is present on tryptophan 31. Position 36 is a 4-hydroxyproline (proline 36). Tryptophan 40 is subject to 6'-bromotryptophan.

As to expression, expressed by the venom duct.

It localises to the secreted. Its function is as follows. Mu-conotoxins block voltage-gated sodium channels. This toxin reversibly blocks voltage-gated sodium channel in cephalopods, with no alteration in the voltage dependence of sodium conductance or on the kinetics of inactivation. The polypeptide is Mu-conotoxin-like Cal 12.2c (Californiconus californicus (California cone)).